Consider the following 1044-residue polypeptide: Sarcoplasmic/endoplasmic reticulum calcium ATPase 2 (1044 aa).

Topologically, residues 1 to 48 (MENAHTKTVEEVLGHFGVNESTGLSLEQVKKLKERWGSNELPAEEGKT) are cytoplasmic. Ser-38 is subject to Phosphoserine. Residues 49–69 (LLELVIEQFEDLLVRILLLAA) traverse the membrane as a helical segment. At 70–89 (CISFVLAWFEEGEETITAFV) the chain is on the lumenal side. A helical membrane pass occupies residues 90 to 110 (EPFVILLILVANAIVGVWQER). At 111-253 (NAENAIEALK…QERTPLQQKL (143 aa)) the chain is on the cytoplasmic side. The helical transmembrane segment at 254–273 (DEFGEQLSKVISLICIAVWI) threads the bilayer. Over 274-295 (INIGHFNDPVHGGSWIRGAIYY) the chain is Lumenal. Residues Tyr-294 and Tyr-295 each carry the 3'-nitrotyrosine modification. A helical membrane pass occupies residues 296 to 313 (FKIAVALAVAAIPEGLPA). The Ca(2+) site is built by Val-304, Ala-305, Ile-307, and Glu-309. Over 314-756 (VITTCLALGT…EEGRAIYNNM (443 aa)) the chain is Cytoplasmic. The active-site 4-aspartylphosphate intermediate is the Asp-351. Residues Asp-351 and Thr-353 each contribute to the Mg(2+) site. Residue Thr-353 coordinates ATP. Residue Thr-441 is modified to Phosphothreonine. Glu-442, Arg-489, and Lys-514 together coordinate ATP. Ser-531 carries the phosphoserine modification. Arg-559 contacts ATP. Residues 575–594 (MHLEDSANFIKYETNLTFVG) form an interaction with HAX1 region. Residue Ser-580 is modified to Phosphoserine. Residues Thr-624, Gly-625, and Asp-626 each coordinate ATP. 2 positions are modified to phosphoserine: Ser-661 and Ser-663. Arg-677 and Lys-683 together coordinate ATP. Mg(2+) is bound at residue Asp-702. An ATP-binding site is contributed by Asn-705. Residues 757–776 (KQFIRYLISSNVGEVVCIFL) form a helical membrane-spanning segment. Ca(2+)-binding residues include Asn-767 and Glu-770. Residues 777 to 786 (TAALGFPEAL) lie on the Lumenal side of the membrane. A helical transmembrane segment spans residues 787 to 807 (IPVQLLWVNLVTDGLPATALG). The tract at residues 787–807 (IPVQLLWVNLVTDGLPATALG) is interaction with PLN. The interval 788 to 1044 (PVQLLWVNLV…DTNFSDMFWS (257 aa)) is interaction with TMEM64 and PDIA3. Ca(2+) contacts are provided by Asn-795, Thr-798, and Asp-799. Residues 808–827 (FNPPDLDIMNKPPRNPKEPL) lie on the Cytoplasmic side of the membrane. The helical transmembrane segment at 828 to 850 (ISGWLFFRYLAIGCYVGAATVGA) threads the bilayer. Topologically, residues 851–896 (AAWWFIAADGGPRVSFYQLSHFLQCKEDNPDFDGVDCAIFESPYPM) are lumenal. Cysteines 875 and 887 form a disulfide. Residues 897–916 (TMALSVLVTIEMCNALNSLS) traverse the membrane as a helical segment. Residue Glu-907 coordinates Ca(2+). At 917-929 (ENQSLLRMPPWEN) the chain is on the cytoplasmic side. A helical membrane pass occupies residues 930-948 (IWLVGSICLSMSLHFLILY). Residues 931 to 942 (WLVGSICLSMSL) are interaction with PLN. The Lumenal portion of the chain corresponds to 949–963 (VEPLPLIFQITPLNL). The chain crosses the membrane as a helical span at residues 964–984 (TQWLMVLKISLPVILMDETLK). The Cytoplasmic portion of the chain corresponds to 985 to 1044 (FVARNYLEQPGKECVQPATKSSCSLSACTDGISWPFVLLIMPLVVWVYSTDTNFSDMFWS).

This sequence belongs to the cation transport ATPase (P-type) (TC 3.A.3) family. Type IIA subfamily. In terms of assembly, interacts with sarcolipin (SLN); the interaction inhibits ATP2A2 Ca(2+) affinity. Interacts with phospholamban (PLN); the interaction inhibits ATP2A2 Ca(2+) affinity. Interacts with myoregulin (MRLN). Interacts with ARLN and ERLN; the interactions inhibit ATP2A2 Ca(2+) affinity. Interacts with STRIT1/DWORF; the interaction results in activation of ATP2A2. Interacts with the monomeric forms of SLN, PLN, ARLN, ERLN and STRI1/DWORF. Interacts with HAX1. Interacts with S100A8 and S100A9. Interacts with SLC35G1 and STIM1. Interacts with TMEM203. Interacts with TMEM64 and PDIA3. Interacts with TMX1. Interacts with TMX2. Interacts with VMP1; VMP1 competes with PLN and SLN to prevent them from forming an inhibitory complex with ATP2A2. Interacts with ULK1. Interacts with S100A1 in a Ca(2+)-dependent manner. Interacts with TUNAR. Interacts with FLVCR2; this interaction occurs in the absence of heme and promotes ATP2A2 proteasomal degradation; this complex is dissociated upon heme binding. Interacts with FNIP1. As to quaternary structure, interacts with TRAM2 (via C-terminus). The cofactor is Mg(2+). Nitrated under oxidative stress. Nitration on the two tyrosine residues inhibits catalytic activity. In terms of processing, serotonylated on Gln residues by TGM2 in response to hypoxia, leading to its inactivation. In terms of tissue distribution, isoform 2 is highly expressed in heart and slow twitch skeletal muscle. Isoform 2 is widely expressed.

It localises to the endoplasmic reticulum membrane. It is found in the sarcoplasmic reticulum membrane. It catalyses the reaction Ca(2+)(in) + ATP + H2O = Ca(2+)(out) + ADP + phosphate + H(+). Its activity is regulated as follows. Has different conformational states with differential Ca2+ affinity. The E1 conformational state (active form) shows high Ca(2+) affinity, while the E2 state exhibits low Ca(2+) affinity. Binding of ATP allosterically increases its affinity for subsequent binding of Ca2+. Reversibly inhibited by phospholamban (PLN) at low calcium concentrations. PLN inhibits ATP2A2 Ca(2+) affinity by disrupting its allosteric activation by ATP. Inhibited by sarcolipin (SLN) and myoregulin (MRLN). The inhibition is blocked by VMP1. Enhanced by STRIT1/DWORF; STRIT1 increases activity by displacing sarcolipin (SLN), phospholamban (PLN) and myoregulin (MRLN). Stabilizes SERCA2 in its E2 state. Its function is as follows. This magnesium-dependent enzyme catalyzes the hydrolysis of ATP coupled with the translocation of calcium from the cytosol to the sarcoplasmic reticulum lumen. Involved in autophagy in response to starvation. Upon interaction with VMP1 and activation, controls ER-isolation membrane contacts for autophagosome formation. Also modulates ER contacts with lipid droplets, mitochondria and endosomes. In coordination with FLVCR2 mediates heme-stimulated switching from mitochondrial ATP synthesis to thermogenesis. In terms of biological role, involved in the regulation of the contraction/relaxation cycle. Acts as a regulator of TNFSF11-mediated Ca(2+) signaling pathways via its interaction with TMEM64 which is critical for the TNFSF11-induced CREB1 activation and mitochondrial ROS generation necessary for proper osteoclast generation. Association between TMEM64 and SERCA2 in the ER leads to cytosolic Ca(2+) spiking for activation of NFATC1 and production of mitochondrial ROS, thereby triggering Ca(2+) signaling cascades that promote osteoclast differentiation and activation. The polypeptide is Sarcoplasmic/endoplasmic reticulum calcium ATPase 2 (Mus musculus (Mouse)).